The chain runs to 539 residues: Chaperonin GroEL (539 aa).

ATP contacts are provided by residues 29–32 (TLGP), 86–90 (DGTTT), glycine 413, 477–479 (NAA), and aspartate 493.

The protein belongs to the chaperonin (HSP60) family. As to quaternary structure, forms a cylinder of 14 subunits composed of two heptameric rings stacked back-to-back. Interacts with the co-chaperonin GroES.

The protein resides in the cytoplasm. The catalysed reaction is ATP + H2O + a folded polypeptide = ADP + phosphate + an unfolded polypeptide.. Together with its co-chaperonin GroES, plays an essential role in assisting protein folding. The GroEL-GroES system forms a nano-cage that allows encapsulation of the non-native substrate proteins and provides a physical environment optimized to promote and accelerate protein folding. The protein is Chaperonin GroEL of Leifsonia xyli subsp. xyli (strain CTCB07).